The sequence spans 576 residues: Colicin-E7 (576 aa).

Disordered regions lie at residues 1 to 75 (MSGG…GGGS), 421 to 478 (SSAL…PVPD), and 506 to 557 (DPEL…GVYD). A compositionally biased stretch (gly residues) spans 19–35 (NINGGPTGLGGNGGASD). The span at 36-45 (GSGWSSENNP) shows a compositional bias: low complexity. Residues 46 to 75 (WGGGSGSGVHWGGGSGHGNGGGNSNSGGGS) are compositionally biased toward gly residues. Composition is skewed to basic and acidic residues over residues 424 to 447 (LERRKQKENKEKDAKAKLDKESKR) and 535 to 548 (SGKRTSFELHHEKP). 3 residues coordinate Zn(2+): His-544, His-569, and His-573.

This sequence belongs to the colicin/pyosin nuclease family.

This plasmid-coded bactericidal protein is an endonuclease active on both single- and double-stranded DNA but with undefined specificity. Functionally, colicins are polypeptide toxins produced by and active against E.coli and closely related bacteria. This Escherichia coli protein is Colicin-E7 (colE7).